The sequence spans 97 residues: Intermembrane phospholipid transport system binding protein MlaB (97 aa).

Residues 1-97 enclose the STAS domain; the sequence is MSESLSWMQT…YNLPADVLPR (97 aa).

The complex is composed of two ATP-binding proteins (MlaF), two transmembrane proteins (MlaE), two cytoplasmic solute-binding proteins (MlaB) and six periplasmic solute-binding proteins (MlaD).

It localises to the cytoplasm. In terms of biological role, part of the ABC transporter complex MlaFEDB, which is involved in a phospholipid transport pathway that maintains lipid asymmetry in the outer membrane by retrograde trafficking of phospholipids from the outer membrane to the inner membrane. MlaB plays critical roles in both the assembly and activity of the complex. May act by modulating MlaF structure and stability. This Escherichia coli (strain K12) protein is Intermembrane phospholipid transport system binding protein MlaB.